The primary structure comprises 394 residues: 3-hydroxybenzoate 6-hydroxylase 1 (394 aa).

This sequence belongs to the 3-hydroxybenzoate 6-hydroxylase family. Homotrimer. The cofactor is FAD.

The catalysed reaction is 3-hydroxybenzoate + NADH + O2 + H(+) = 2,5-dihydroxybenzoate + NAD(+) + H2O. Inhibited by manganese, copper, mercury, and iron ions. Its function is as follows. Catalyzes the NAD- or NADP-dependent conversion of 3-hydroxybenzoate to gentisate. The affinity of the enzyme toward NAD is twice as high as for NADP. The enzyme shows higher specific activities against the intermediates in the degradation of 2,5-xylenol and 3,5-xylenol, 3-hydroxy-4-methylbenzoate and 3-hydroxy-5-methylbenzoate, respectively, than for 3-hydroxybenzoate. It also shows activity against 3-substituted benzoates. The polypeptide is 3-hydroxybenzoate 6-hydroxylase 1 (xlnD) (Aquipseudomonas alcaligenes (Pseudomonas alcaligenes)).